A 92-amino-acid polypeptide reads, in one-letter code: Small ribosomal subunit protein uS19c (92 aa).

It belongs to the universal ribosomal protein uS19 family.

It is found in the plastid. It localises to the chloroplast. Its function is as follows. Protein S19 forms a complex with S13 that binds strongly to the 16S ribosomal RNA. The protein is Small ribosomal subunit protein uS19c of Cicer arietinum (Chickpea).